Reading from the N-terminus, the 236-residue chain is Ubiquinone biosynthesis O-methyltransferase (236 aa).

Positions 39, 59, 80, and 124 each coordinate S-adenosyl-L-methionine.

This sequence belongs to the methyltransferase superfamily. UbiG/COQ3 family.

It carries out the reaction a 3-demethylubiquinol + S-adenosyl-L-methionine = a ubiquinol + S-adenosyl-L-homocysteine + H(+). The catalysed reaction is a 3-(all-trans-polyprenyl)benzene-1,2-diol + S-adenosyl-L-methionine = a 2-methoxy-6-(all-trans-polyprenyl)phenol + S-adenosyl-L-homocysteine + H(+). It participates in cofactor biosynthesis; ubiquinone biosynthesis. In terms of biological role, O-methyltransferase that catalyzes the 2 O-methylation steps in the ubiquinone biosynthetic pathway. This Shewanella sp. (strain W3-18-1) protein is Ubiquinone biosynthesis O-methyltransferase.